The following is a 34-amino-acid chain: Leader peptide SpeFL (34 aa).

Residues 1-13 are sensor domain; sequence MENNSRTMPHIRR. Positions 10-16 match the Ornithine recognition loop motif; the sequence is HIRRTTH. Position 13 (Arg13) interacts with L-ornithine. Residues 14 to 34 are effector domain; that stretch reads TTHIMKFAHRNSFDFHFFNAR.

It belongs to the speF operon leader peptide family. Binds ornithine in stalled 70S ribosomes, blocking the upper two-thirds of the exit tunnel. Contacts 23S rRNA and ribosomal proteins L4 and L22.

In terms of biological role, a small protein (arrest peptide) encoded upstream of inducible ornithine carboxylase gene (speF) that controls expression of downstream genes (speF and patE) by nascent chain-translational arrest and transcriptional attenuation. In the presence of ornithine a toeprint due to ribosomal arrest can be seen on the speFL transcript. Only L-ornithine (not other tested amino acids) has this effect. It is thought that in the presence of ornithine, ribosomal stalling on speFL prevents binding of Rho transcription termination factor to a downstream rut site allowing transcription of the operon. In the absence of ornithine, ribosomes terminate translation and are recycled, exposing the rut site allowing Rho to bind and prematurely terminate transcription. The presence of a pair of rare Arg codons could slow down translation to prevent polysome accumulation and to expose the rut site to Rho. This chain is Leader peptide SpeFL, found in Escherichia coli (strain K12).